The primary structure comprises 370 residues: L-lactate oxidase (370 aa).

The region spanning 8–367 (DPDGMPVTLS…TPDLLTGFSG (360 aa)) is the FMN hydroxy acid dehydrogenase domain. Tyr34 is a binding site for pyruvate. FMN contacts are provided by residues 87 to 89 (PMA), Ser116, and Gln136. Tyr138 contributes to the pyruvate binding site. Residue Thr164 participates in FMN binding. Arg173 contributes to the pyruvate binding site. FMN is bound by residues Lys238 and Ser260. Residues His262 and Arg265 each contribute to the pyruvate site. The active-site Proton acceptor is His262. Residues 293 to 297 (DGGIR) and Arg317 each bind FMN.

This sequence belongs to the FMN-dependent alpha-hydroxy acid dehydrogenase family. Homotetramer. FMN serves as cofactor.

It carries out the reaction (S)-lactate + O2 = pyruvate + H2O2. The catalysed reaction is a (2S)-2-hydroxycarboxylate + O2 = a 2-oxocarboxylate + H2O2. The enzyme catalyses glycolate + O2 = glyoxylate + H2O2. It catalyses the reaction 2-hydroxyoctadecanoate + O2 = 2-oxooctadecanoate + H2O2. Its function is as follows. Catalyzes the oxidation of (S)-lactate (L-lactate) to pyruvate, with a reduction of O2 to H2O2. Is also able to use glycolate and to a lesser extent 2-hydroxyoctadecanoate as substrate. This is L-lactate oxidase from Roseobacter sp. (strain GAI101).